A 188-amino-acid polypeptide reads, in one-letter code: Adenine phosphoribosyltransferase (188 aa).

The protein belongs to the purine/pyrimidine phosphoribosyltransferase family. Homodimer.

The protein localises to the cytoplasm. It catalyses the reaction AMP + diphosphate = 5-phospho-alpha-D-ribose 1-diphosphate + adenine. Its pathway is purine metabolism; AMP biosynthesis via salvage pathway; AMP from adenine: step 1/1. Catalyzes a salvage reaction resulting in the formation of AMP, that is energically less costly than de novo synthesis. This chain is Adenine phosphoribosyltransferase, found in Burkholderia cenocepacia (strain HI2424).